The chain runs to 173 residues: NADH dehydrogenase [ubiquinone] 1 alpha subcomplex assembly factor 4 (173 aa).

The N-myristoyl glycine moiety is linked to residue G2. The disordered stretch occupies residues 16–40; the sequence is KRAEREISKRKPSMAPKHPSTRDLL. The residue at position 35 (S35) is a Phosphoserine.

It belongs to the NDUFAF4 family. As to quaternary structure, binds calmodulin. Interacts with NDUFAF3. Phosphorylated on serine. Prolactin stimulate serine phosphorylation.

It localises to the mitochondrion. Its subcellular location is the membrane. In terms of biological role, may be involved in cell proliferation and survival of hormone-dependent tumor cells. Involved in the assembly of mitochondrial NADH:ubiquinone oxidoreductase complex (complex I). This Mus musculus (Mouse) protein is NADH dehydrogenase [ubiquinone] 1 alpha subcomplex assembly factor 4 (Ndufaf4).